A 272-amino-acid chain; its full sequence is Proteasome subunit beta (272 aa).

The propeptide at 1-47 is removed in mature form; by autocatalysis; the sequence is MSTGGDRLPEAFLRPGSSSFVEFLREVAPQSHPEHARPAGAGDVVHA. The active-site Nucleophile is the T48.

It belongs to the peptidase T1B family. As to quaternary structure, the 20S proteasome core is composed of 14 alpha and 14 beta subunits that assemble into four stacked heptameric rings, resulting in a barrel-shaped structure. The two inner rings, each composed of seven catalytic beta subunits, are sandwiched by two outer rings, each composed of seven alpha subunits. The catalytic chamber with the active sites is on the inside of the barrel. Has a gated structure, the ends of the cylinder being occluded by the N-termini of the alpha-subunits. Is capped by the proteasome-associated ATPase, ARC.

The protein resides in the cytoplasm. It catalyses the reaction Cleavage of peptide bonds with very broad specificity.. Its pathway is protein degradation; proteasomal Pup-dependent pathway. Its activity is regulated as follows. The formation of the proteasomal ATPase ARC-20S proteasome complex, likely via the docking of the C-termini of ARC into the intersubunit pockets in the alpha-rings, may trigger opening of the gate for substrate entry. Interconversion between the open-gate and close-gate conformations leads to a dynamic regulation of the 20S proteasome proteolysis activity. In terms of biological role, component of the proteasome core, a large protease complex with broad specificity involved in protein degradation. The sequence is that of Proteasome subunit beta from Beutenbergia cavernae (strain ATCC BAA-8 / DSM 12333 / CCUG 43141 / JCM 11478 / NBRC 16432 / NCIMB 13614 / HKI 0122).